The sequence spans 351 residues: Fe-S cluster assembly protein DRE2 (351 aa).

The segment at 1–151 is N-terminal SAM-like domain; it reads MATTGRVLLL…KPDIGAQQAI (151 aa). Disordered regions lie at residues 93 to 118 and 157 to 186; these read RNRENKPWGLSDGNGSNANSSRRYND and RRRKEKEKTDTLASSANYSTNGTVGAPSSN. Composition is skewed to polar residues over residues 105-114 and 167-186; these read GNGSNANSSR and TLASSANYSTNGTVGAPSSN. The linker stretch occupies residues 152–243; that stretch reads PLKLSRRRKE…EDELLDEDDM (92 aa). 4 residues coordinate [2Fe-2S] cluster: cysteine 253, cysteine 264, cysteine 267, and cysteine 269. The tract at residues 253–269 is fe-S binding site A; sequence CRPKPGKRRRACKDCSC. [4Fe-4S] cluster is bound by residues cysteine 314, cysteine 317, cysteine 325, and cysteine 328. 2 consecutive short sequence motifs (cx2C motif) follow at residues 314-317 and 325-328; these read CGNC and CDGC. The interval 314 to 328 is fe-S binding site B; the sequence is CGNCSLGDAFRCDGC.

It belongs to the anamorsin family. Monomer. Interacts with TAH18. Interacts with MIA40. [2Fe-2S] cluster is required as a cofactor. The cofactor is [4Fe-4S] cluster.

It localises to the cytoplasm. It is found in the mitochondrion intermembrane space. In terms of biological role, component of the cytosolic iron-sulfur (Fe-S) protein assembly (CIA) machinery required for the maturation of extramitochondrial Fe-S proteins. Part of an electron transfer chain functioning in an early step of cytosolic Fe-S biogenesis, facilitating the de novo assembly of a [4Fe-4S] cluster on the scaffold complex CFD1-NBP35. Electrons are transferred to DRE2 from NADPH via the FAD- and FMN-containing protein TAH18. TAH18-DRE2 are also required for the assembly of the diferric tyrosyl radical cofactor of ribonucleotide reductase (RNR), probably by providing electrons for reduction during radical cofactor maturation in the catalytic small subunit RNR2. This chain is Fe-S cluster assembly protein DRE2, found in Ajellomyces capsulatus (strain NAm1 / WU24) (Darling's disease fungus).